Here is a 384-residue protein sequence, read N- to C-terminus: Queuine tRNA-ribosyltransferase (384 aa).

Asp92 acts as the Proton acceptor in catalysis. Substrate-binding positions include Asp92–Phe96, Asp146, Gln190, and Gly217. The tract at residues Gly248–Asp254 is RNA binding. Asp267 functions as the Nucleophile in the catalytic mechanism. The tract at residues Thr272–Arg276 is RNA binding; important for wobble base 34 recognition. The Zn(2+) site is built by Cys305, Cys307, Cys310, and His337.

The protein belongs to the queuine tRNA-ribosyltransferase family. In terms of assembly, homodimer. Within each dimer, one monomer is responsible for RNA recognition and catalysis, while the other monomer binds to the replacement base PreQ1. Requires Zn(2+) as cofactor.

The enzyme catalyses 7-aminomethyl-7-carbaguanine + guanosine(34) in tRNA = 7-aminomethyl-7-carbaguanosine(34) in tRNA + guanine. The protein operates within tRNA modification; tRNA-queuosine biosynthesis. Its function is as follows. Catalyzes the base-exchange of a guanine (G) residue with the queuine precursor 7-aminomethyl-7-deazaguanine (PreQ1) at position 34 (anticodon wobble position) in tRNAs with GU(N) anticodons (tRNA-Asp, -Asn, -His and -Tyr). Catalysis occurs through a double-displacement mechanism. The nucleophile active site attacks the C1' of nucleotide 34 to detach the guanine base from the RNA, forming a covalent enzyme-RNA intermediate. The proton acceptor active site deprotonates the incoming PreQ1, allowing a nucleophilic attack on the C1' of the ribose to form the product. After dissociation, two additional enzymatic reactions on the tRNA convert PreQ1 to queuine (Q), resulting in the hypermodified nucleoside queuosine (7-(((4,5-cis-dihydroxy-2-cyclopenten-1-yl)amino)methyl)-7-deazaguanosine). The chain is Queuine tRNA-ribosyltransferase from Xylella fastidiosa (strain M12).